The chain runs to 236 residues: 2,3,4,5-tetrahydropyridine-2,6-dicarboxylate N-acetyltransferase (236 aa).

Belongs to the transferase hexapeptide repeat family. DapH subfamily.

It catalyses the reaction (S)-2,3,4,5-tetrahydrodipicolinate + acetyl-CoA + H2O = L-2-acetamido-6-oxoheptanedioate + CoA. Its pathway is amino-acid biosynthesis; L-lysine biosynthesis via DAP pathway; LL-2,6-diaminopimelate from (S)-tetrahydrodipicolinate (acetylase route): step 1/3. Its function is as follows. Catalyzes the transfer of an acetyl group from acetyl-CoA to tetrahydrodipicolinate. The sequence is that of 2,3,4,5-tetrahydropyridine-2,6-dicarboxylate N-acetyltransferase from Bacillus licheniformis (strain ATCC 14580 / DSM 13 / JCM 2505 / CCUG 7422 / NBRC 12200 / NCIMB 9375 / NCTC 10341 / NRRL NRS-1264 / Gibson 46).